The following is a 253-amino-acid chain: uncharacterized protein (253 aa).

The signal sequence occupies residues 1 to 19 (MRYLKRITIYISLLILVSG). Residue Cys-20 is the site of N-palmitoyl cysteine attachment. The S-diacylglycerol cysteine moiety is linked to residue Cys-20.

The protein belongs to the staphylococcal tandem lipoprotein family.

The protein resides in the cell membrane. This is an uncharacterized protein from Staphylococcus epidermidis (strain ATCC 12228 / FDA PCI 1200).